The following is a 416-amino-acid chain: Homeobox protein ceh-62 (416 aa).

Residues 103–113 (TPTPIIATPSI) show a composition bias toward low complexity. 2 disordered regions span residues 103 to 144 (TPTP…QATR) and 178 to 247 (FQNR…FPPT). The span at 118–127 (QPLQSPSAPN) shows a compositional bias: polar residues. Residues 130 to 189 (SRRKRTTFSPEQATRLEAEYIGDSYMAREKRHLLAQSLKLSENQVKTWFQNRRAKDKRDR) constitute a DNA-binding region (homeobox). Positions 193–218 (NASNHTSNSRRSSPSRKSSSDSTPTP) are enriched in low complexity. The segment covering 219 to 240 (TQATQFDMPTQIQTASPPTTAD) has biased composition (polar residues).

It is found in the nucleus. The chain is Homeobox protein ceh-62 from Caenorhabditis elegans.